Here is a 270-residue protein sequence, read N- to C-terminus: Regulatory protein RecX (270 aa).

The protein belongs to the RecX family.

The protein localises to the cytoplasm. Functionally, modulates RecA activity. The sequence is that of Regulatory protein RecX from Bacillus cereus (strain 03BB102).